A 127-amino-acid chain; its full sequence is Large ribosomal subunit protein bL12 (127 aa).

It belongs to the bacterial ribosomal protein bL12 family. As to quaternary structure, homodimer. Part of the ribosomal stalk of the 50S ribosomal subunit. Forms a multimeric L10(L12)X complex, where L10 forms an elongated spine to which 2 to 4 L12 dimers bind in a sequential fashion. Binds GTP-bound translation factors.

Functionally, forms part of the ribosomal stalk which helps the ribosome interact with GTP-bound translation factors. Is thus essential for accurate translation. This chain is Large ribosomal subunit protein bL12, found in Streptomyces griseus subsp. griseus (strain JCM 4626 / CBS 651.72 / NBRC 13350 / KCC S-0626 / ISP 5235).